A 694-amino-acid chain; its full sequence is Nuclear cap-binding protein subunit 3 (694 aa).

Residues 1 to 47 (MAAVRSLRVSVKSDSASDRSESDSESDSDRDAREAEPMEVEEGEVEL) form a disordered region. Basic and acidic residues predominate over residues 15–36 (SASDRSESDSESDSDRDAREAE). Positions 37 to 47 (PMEVEEGEVEL) are enriched in acidic residues. Residues 126-187 (EALHMSGVDD…LSRMPDKEEV (62 aa)) form an RNA recognition motif (RRM) domain region. The WLDD motif; essential for 7-methylguanosine-containing mRNA cap binding motif lies at 155 to 158 (WIDD). 3 disordered regions span residues 183-277 (DKEE…VKPF), 336-430 (ILKT…MDYD), and 461-694 (LRNS…DSDS). Positions 189-203 (NTDSSKPSELPVQTQ) are enriched in polar residues. Acidic residues predominate over residues 212-235 (DDDDDDDEEEEGEVDDDDDDDEED). Over residues 236 to 264 (EKARDIEDETEKKPQETRETSLSQAERDS) the composition is skewed to basic and acidic residues. Over residues 368–386 (EPIEEEEEEEEDGEEDMDA) the composition is skewed to acidic residues. Residues 387–404 (DDRVVEYKDRGEKERGPR) are compositionally biased toward basic and acidic residues. Residues 477-496 (IGGGGGGGSGGAVEGRGEGG) are compositionally biased toward gly residues. Composition is skewed to basic and acidic residues over residues 501 to 517 (TSEK…EKRQ), 563 to 595 (SRRE…DKKT), and 605 to 618 (SHKD…DKPS). Positions 634-646 (DSDGVEDEDEEDD) are enriched in acidic residues. Residues 685–694 (DGSNGSDSDS) show a composition bias toward low complexity.

This sequence belongs to the NCBP3 family. As to quaternary structure, component of an alternative cap-binding complex (CBC) composed of NCBP1/CBP80 and NCBP3.

It localises to the nucleus. The protein localises to the cytoplasm. In terms of biological role, associates with NCBP1/CBP80 to form an alternative cap-binding complex (CBC) which plays a key role in mRNA export. NCBP3 serves as adapter protein linking the capped RNAs (m7GpppG-capped RNA) to NCBP1/CBP80. Unlike the conventional CBC with NCBP2 which binds both small nuclear RNA (snRNA) and messenger (mRNA) and is involved in their export from the nucleus, the alternative CBC with NCBP3 does not bind snRNA and associates only with mRNA thereby playing a role in only mRNA export. The chain is Nuclear cap-binding protein subunit 3 from Danio rerio (Zebrafish).